The primary structure comprises 390 residues: Alanine racemase (390 aa).

Lysine 46 functions as the Proton acceptor; specific for D-alanine in the catalytic mechanism. Lysine 46 bears the N6-(pyridoxal phosphate)lysine mark. Arginine 144 lines the substrate pocket. Tyrosine 275 acts as the Proton acceptor; specific for L-alanine in catalysis. Methionine 323 serves as a coordination point for substrate.

This sequence belongs to the alanine racemase family. Pyridoxal 5'-phosphate serves as cofactor.

The catalysed reaction is L-alanine = D-alanine. It participates in amino-acid biosynthesis; D-alanine biosynthesis; D-alanine from L-alanine: step 1/1. Functionally, catalyzes the interconversion of L-alanine and D-alanine. May also act on other amino acids. In Mycolicibacterium vanbaalenii (strain DSM 7251 / JCM 13017 / BCRC 16820 / KCTC 9966 / NRRL B-24157 / PYR-1) (Mycobacterium vanbaalenii), this protein is Alanine racemase (alr).